We begin with the raw amino-acid sequence, 503 residues long: MTDKSQAPEVDVNEQIAQRKAKLSALRDKGIAFPNDFRRDSLAADLHAEYDNLSKEELAEKGIRVKVAGRMMTRRIMGKASFATIQDMSGKIQLYVARDNLPEGYYNTEFKKWDLGDILGASGTLFITGTGELSVQVDEVRLLTKALRPLPDKFHGLSDQEMRYRQRYLDLITNEESRSTFMARSKIIDYIRRFLSDRQFLEVETPMMQAIPGGAAARPFSTHHNALDMELFLRIAPELYLKRLVVGGFEKVFEINRNFRNEGLSTRHNPEFTMLEFYWAYADYHDLMDLTEQMLRGAAESVLGSAQFTSQGVDYDFGKPFERMTVLEAIVKYMPEVSLEQLNDMNTATEIAEQVGVSVKPSWGLGKVQIEIFETVAEHRLIQPTFITAYPAEVSPLARRHDDNPFVTDRFEFFAGGRELANGFSELNDAEDQAERFREQVEQKEAGDDEAMFYDEDYVTALEHGMPPTAGQGIGIDRLVMLLTDSASIRDVLLFPHMRPKAD.

E412 and E419 together coordinate Mg(2+).

Belongs to the class-II aminoacyl-tRNA synthetase family. In terms of assembly, homodimer. The cofactor is Mg(2+).

It localises to the cytoplasm. The catalysed reaction is tRNA(Lys) + L-lysine + ATP = L-lysyl-tRNA(Lys) + AMP + diphosphate. This Idiomarina loihiensis (strain ATCC BAA-735 / DSM 15497 / L2-TR) protein is Lysine--tRNA ligase.